The following is a 175-amino-acid chain: Peptide deformylase (175 aa).

Fe cation-binding residues include Cys96 and His138. The active site involves Glu139. His142 serves as a coordination point for Fe cation.

The protein belongs to the polypeptide deformylase family. Requires Fe(2+) as cofactor.

The enzyme catalyses N-terminal N-formyl-L-methionyl-[peptide] + H2O = N-terminal L-methionyl-[peptide] + formate. Functionally, removes the formyl group from the N-terminal Met of newly synthesized proteins. Requires at least a dipeptide for an efficient rate of reaction. N-terminal L-methionine is a prerequisite for activity but the enzyme has broad specificity at other positions. The polypeptide is Peptide deformylase (Rhodopseudomonas palustris (strain ATCC BAA-98 / CGA009)).